The chain runs to 2061 residues: Putative PWWP domain-containing DNA repair factor 4 (2061 aa).

Disordered regions lie at residues 101-211 (TNLG…SRAR), 382-408 (ALGR…RSSV), 541-586 (TPGT…GDGS), 668-694 (PATL…GDGS), 864-910 (PTPG…SERS), 1046-1072 (PGTM…GDRS), 1159-1182 (ALHG…RGDS), 1205-1383 (KAIA…RDDK), 1521-1548 (PGAL…DSSP), and 1602-1726 (KKGK…KLAN). Composition is skewed to basic and acidic residues over residues 133–153 (PRED…KREN) and 162–173 (ESKRALRDDRSQ). Residues 397 to 408 (TPGTLQGNRSSV) are compositionally biased toward polar residues. The span at 1051–1061 (GDSSTARTATA) shows a compositional bias: polar residues. Positions 1364–1373 (DSSQVHTTIA) are enriched in polar residues. Residues 1639–1648 (LKEETQDSRP) show a composition bias toward basic and acidic residues. Over residues 1656–1665 (PESSPFSGNI) the composition is skewed to polar residues. A PWWP domain is found at 1756–1817 (RGTMVWFKFQ…KHLDCKEKEK (62 aa)).

The protein belongs to the PWWP3A family.

In Homo sapiens (Human), this protein is Putative PWWP domain-containing DNA repair factor 4.